The following is a 266-amino-acid chain: Regulatory protein RecX (266 aa).

Belongs to the RecX family.

The protein resides in the cytoplasm. Its function is as follows. Modulates RecA activity. This is Regulatory protein RecX from Leuconostoc citreum (strain KM20).